An 83-amino-acid chain; its full sequence is Phytosulfokines 4 (83 aa).

Residues 1–28 (MAARTVAVAAALAVLLIFAASSATVAMA) form the signal peptide. A propeptide spanning residues 29-74 (GRPTPTTSLDEEAAQAAAQSEIGGGCKEGEGEEECLARRTLTAHTD) is cleaved from the precursor. 2 positions are modified to sulfotyrosine: tyrosine 75 and tyrosine 77. Positions 80-83 (QHHN) are excised as a propeptide.

Belongs to the phytosulfokine family. In terms of processing, sulfation is important for activity and for the binding to a putative membrane receptor. PSK-alpha is produced by endopeptidase digestion. PSK-beta is produced from PSK-alpha by exopeptidase digestion.

It localises to the secreted. Its function is as follows. Promotes plant cell differentiation, organogenesis and somatic embryogenesis as well as cell proliferation. This is Phytosulfokines 4 (PSK4) from Oryza sativa subsp. japonica (Rice).